Consider the following 454-residue polypeptide: Bifunctional protein GlmU (454 aa).

The pyrophosphorylase stretch occupies residues 1–228 (MTLPLHVVIL…PQHVEGANDP (228 aa)). Residues 10-13 (LAAG), Lys-24, Gln-76, 81-82 (GT), 103-105 (YGD), Gly-138, Glu-153, Asn-168, and Asn-226 contribute to the UDP-N-acetyl-alpha-D-glucosamine site. Mg(2+) is bound at residue Asp-105. Asn-226 lines the Mg(2+) pocket. The tract at residues 229-249 (WQLAQLERAWQLRAARTLCLQ) is linker. The tract at residues 250-454 (GVRMADPARV…IEGWKRPTKK (205 aa)) is N-acetyltransferase. Arg-332 and Lys-350 together coordinate UDP-N-acetyl-alpha-D-glucosamine. The active-site Proton acceptor is His-362. Residues Tyr-365 and Asn-376 each coordinate UDP-N-acetyl-alpha-D-glucosamine. Residues Ala-379, 385–386 (NY), Ser-404, Ala-422, and Arg-439 contribute to the acetyl-CoA site.

This sequence in the N-terminal section; belongs to the N-acetylglucosamine-1-phosphate uridyltransferase family. The protein in the C-terminal section; belongs to the transferase hexapeptide repeat family. As to quaternary structure, homotrimer. The cofactor is Mg(2+).

Its subcellular location is the cytoplasm. The catalysed reaction is alpha-D-glucosamine 1-phosphate + acetyl-CoA = N-acetyl-alpha-D-glucosamine 1-phosphate + CoA + H(+). It carries out the reaction N-acetyl-alpha-D-glucosamine 1-phosphate + UTP + H(+) = UDP-N-acetyl-alpha-D-glucosamine + diphosphate. The protein operates within nucleotide-sugar biosynthesis; UDP-N-acetyl-alpha-D-glucosamine biosynthesis; N-acetyl-alpha-D-glucosamine 1-phosphate from alpha-D-glucosamine 6-phosphate (route II): step 2/2. It participates in nucleotide-sugar biosynthesis; UDP-N-acetyl-alpha-D-glucosamine biosynthesis; UDP-N-acetyl-alpha-D-glucosamine from N-acetyl-alpha-D-glucosamine 1-phosphate: step 1/1. It functions in the pathway bacterial outer membrane biogenesis; LPS lipid A biosynthesis. Catalyzes the last two sequential reactions in the de novo biosynthetic pathway for UDP-N-acetylglucosamine (UDP-GlcNAc). The C-terminal domain catalyzes the transfer of acetyl group from acetyl coenzyme A to glucosamine-1-phosphate (GlcN-1-P) to produce N-acetylglucosamine-1-phosphate (GlcNAc-1-P), which is converted into UDP-GlcNAc by the transfer of uridine 5-monophosphate (from uridine 5-triphosphate), a reaction catalyzed by the N-terminal domain. The chain is Bifunctional protein GlmU from Xanthomonas euvesicatoria pv. vesicatoria (strain 85-10) (Xanthomonas campestris pv. vesicatoria).